The sequence spans 1358 residues: Tenascin-R (1358 aa).

Positions 1–31 (MGIDGETVVLKNMLIGVNLILLGSMLKPSEC) are cleaved as a signal peptide. The tract at residues 37–58 (TERAQRQTVEEEGGASSYNTSS) is disordered. Residue Asn-55 is glycosylated (N-linked (GlcNAc...) asparagine). A coiled-coil region spans residues 127 to 157 (CASSSQVLQELLSRIEMLEREVSLLRDQCNT). The O-linked (Xyl...) (chondroitin sulfate) serine glycan is linked to Ser-176. Residues Asn-180 and Asn-198 are each glycosylated (N-linked (GlcNAc...) asparagine). EGF-like domains follow at residues 188–199 (CICNEGWFGKNC), 219–230 (CICDSEYSGDDC), and 250–261 (CVCEEPYTGEDC). Ser-271 is a glycosylation site (O-linked (Xyl...) (chondroitin sulfate) serine). A glycan (N-linked (GlcNAc...) asparagine) is linked at Asn-278. Residues 281–292 (CLCQEGYAGEDC) form the EGF-like 4 domain. Intrachain disulfides connect Cys-297–Cys-307 and Cys-314–Cys-323. Ser-302 is a glycosylation site (O-linked (Xyl...) (chondroitin sulfate) serine). Residues 312 to 323 (CICEEGYQGPDC) enclose the EGF-like 5 domain. Fibronectin type-III domains lie at 328–420 (PPED…TPQG), 421–505 (LQFK…TVID), 506–597 (GPTQ…IDAP), 598–687 (KNLR…TELD), 688–777 (SPRD…FRPI), 778–865 (SHLH…TGID), 866–955 (PPKN…AMDS), 956–1042 (PMDL…TLLD), and 1043–1131 (PPDN…GGRV). N-linked (GlcNAc...) asparagine glycosylation is found at Asn-392, Asn-470, and Asn-581. Residue Ser-724 is modified to Phosphoserine. N-linked (GlcNAc...) asparagine glycosylation is found at Asn-791, Asn-869, Asn-874, Asn-1036, Asn-1046, and Asn-1261. The Fibrinogen C-terminal domain occupies 1129–1344 (GRVFSHPQDC…FVEMKMRPYI (216 aa)).

This sequence belongs to the tenascin family. As to quaternary structure, interacts with BCAN and ACAN in a calcium-dependent manner. Interacts with SCN2B, PTPRZ1, and CSPG3. Forms oligomers. Isoforms 1 and 2 form respectively trimeric (tribrachion) and dimeric kink-armed rodlike structures, which are linked by disulfide bridges. Interacts with CNTN1, TNC and FN1. In terms of processing, contains N-linked oligosaccharides with a sulfated carbohydrate structures. Contains N-linked oligosaccharides, O-linked sialylated structures and O-linked chondroitin sulfate glycosaminoglycans. In terms of tissue distribution, brain-specific.

The protein resides in the secreted. The protein localises to the extracellular space. It localises to the extracellular matrix. Functionally, neural extracellular matrix (ECM) protein involved in interactions with different cells and matrix components. Theses interactions can influence cellular behavior by either evoking a stable adhesion and differentiation, or repulsion and inhibition of neurite growth. Binding to cell surface gangliosides inhibits RGD-dependent integrin-mediated cell adhesion and results in an inhibition of PTK2/FAK1 (FAK) phosphorylation and cell detachment. Binding to membrane surface sulfatides results in a oligodendrocyte adhesion and differentiation. Interaction with CNTN1 induces a repulsion of neurons and an inhibition of neurite outgrowth. Interacts with SCN2B may play a crucial role in clustering and regulation of activity of sodium channels at nodes of Ranvier. TNR-linked chondroitin sulfate glycosaminoglycans are involved in the interaction with FN1 and mediates inhibition of cell adhesion and neurite outgrowth. The highly regulated addition of sulfated carbohydrate structure may modulate the adhesive properties of TNR over the course of development and during synapse maintenance. This chain is Tenascin-R (Tnr), found in Mus musculus (Mouse).